The primary structure comprises 201 residues: Transcription factor MYB82 (201 aa).

2 consecutive HTH myb-type domains span residues 9 to 61 (KSYV…KNYL) and 62 to 116 (RPNI…NKKP). 2 consecutive DNA-binding regions (H-T-H motif) follow at residues 37–61 (WADI…KNYL) and 89–112 (WSLI…NTHL). Residues 112–133 (LNKKPNSRRQNAPESIVGATPF) are disordered.

As to quaternary structure, homodimer and heterodimer with GL1. Part of the WD40-bHLH-MYB complex. Interacts with BHLH012/MYC1 and BHLH042/TT8. Interacts (via N-terminus) with GL1 and GL3. Mainly expressed in the trichomes of new leaves.

Its subcellular location is the nucleus. Functionally, transcription activation factor positively regulating trichomes development. Has a function nearly equivalent to that of GL1 and can complement gl1 mutants. The protein is Transcription factor MYB82 (MYB82) of Arabidopsis thaliana (Mouse-ear cress).